Consider the following 172-residue polypeptide: Stellate protein CG33236/CG33240/CG33244/CG33245 (172 aa).

This sequence belongs to the casein kinase 2 subunit beta family. In terms of assembly, interacts in vitro with the casein kinase 2 alpha subunit (CkII-alpha). The relevance of such interaction is however unclear in vivo. As to expression, probably not expressed in wild-type flies. In males lacking the Y chromosome, it is testis-specific and constitutes the main component of star-shaped crystals.

Its function is as follows. Unknown. In males lacking the Y chromosome, its strong overexpression leads to the appearance of proteinaceous star-shaped crystals in the primary spermatocytes causing meiotic drive, possibly by interfering with normal casein kinase 2 activity. This Drosophila melanogaster (Fruit fly) protein is Stellate protein CG33236/CG33240/CG33244/CG33245 (Ste:CG33236).